The primary structure comprises 168 residues: Cytochrome c-type biogenesis protein CcmE (168 aa).

Residues 1 to 23 (MTTAPSGLPGTPLPPARRRERPR) are Cytoplasmic-facing. The chain crosses the membrane as a helical; Signal-anchor for type II membrane protein span at residues 24–44 (WPLLVAGAAVLGLIGYMVLGN). At 45–168 (ANSNLVYYVL…KILNDQSTKP (124 aa)) the chain is on the extracellular side. Heme is bound by residues His-137 and Tyr-141. The interval 145 to 168 (DSKGEGQYSQDDLKKILNDQSTKP) is disordered.

It belongs to the CcmE/CycJ family.

Its subcellular location is the cell membrane. Its function is as follows. Heme chaperone required for the biogenesis of c-type cytochromes. Transiently binds heme delivered by CcmC and transfers the heme to apo-cytochromes in a process facilitated by CcmF and CcmH. The protein is Cytochrome c-type biogenesis protein CcmE of Deinococcus radiodurans (strain ATCC 13939 / DSM 20539 / JCM 16871 / CCUG 27074 / LMG 4051 / NBRC 15346 / NCIMB 9279 / VKM B-1422 / R1).